A 685-amino-acid chain; its full sequence is Serine/threonine-protein kinase PLK2 (685 aa).

The segment at 24-71 (KGCGADSKKKRPPQPPEESQPPQSQAQVPPAAAHHHHHHSHSGPEISR) is disordered. The segment covering 43–55 (QPPQSQAQVPPAA) has biased composition (low complexity). Residues 82–334 (YCRGKVLGKG…LDDIIRHDFF (253 aa)) form the Protein kinase domain. Residues 88-96 (LGKGGFAKC) and Lys-111 each bind ATP. Catalysis depends on Asp-205, which acts as the Proton acceptor. Position 239 is a phosphothreonine (Thr-239). The interval 406–433 (SITQQPSKHRTDEELQPPTTTVARSGTP) is disordered. POLO box domains lie at 503 to 581 (WVTK…YMEE) and 601 to 685 (YLLQ…QRCN).

Belongs to the protein kinase superfamily. Ser/Thr protein kinase family. CDC5/Polo subfamily. Interacts with NSF; causing NSF dissociation from GRIA2. Interacts with CIB1. Post-translationally, catalytic activity is enhanced by phosphorylation of Thr-239.

The protein localises to the cytoplasm. It is found in the cytoskeleton. Its subcellular location is the microtubule organizing center. It localises to the centrosome. The protein resides in the centriole. The protein localises to the cell projection. It is found in the dendrite. The catalysed reaction is L-seryl-[protein] + ATP = O-phospho-L-seryl-[protein] + ADP + H(+). The enzyme catalyses L-threonyl-[protein] + ATP = O-phospho-L-threonyl-[protein] + ADP + H(+). With respect to regulation, activated by phosphorylation of Thr-239. Once activated, activity is stimulated by binding target proteins. Tumor suppressor serine/threonine-protein kinase involved in synaptic plasticity, centriole duplication and G1/S phase transition. Polo-like kinases act by binding and phosphorylating proteins that are already phosphorylated on a specific motif recognized by the POLO box domains. Phosphorylates CPAP, NPM1, RAPGEF2, RASGRF1, SNCA, SIPA1L1 and SYNGAP1. Plays a key role in synaptic plasticity and memory by regulating the Ras and Rap protein signaling: required for overactivity-dependent spine remodeling by phosphorylating the Ras activator RASGRF1 and the Rap inhibitor SIPA1L1 leading to their degradation by the proteasome. Conversely, phosphorylates the Rap activator RAPGEF2 and the Ras inhibitor SYNGAP1, promoting their activity. Also regulates synaptic plasticity independently of kinase activity, via its interaction with NSF that disrupts the interaction between NSF and the GRIA2 subunit of AMPARs, leading to a rapid rundown of AMPAR-mediated current that occludes long term depression. Required for procentriole formation and centriole duplication by phosphorylating CPAP and NPM1, respectively. Its induction by p53/TP53 suggests that it may participate in the mitotic checkpoint following stress. The protein is Serine/threonine-protein kinase PLK2 (PLK2) of Pongo abelii (Sumatran orangutan).